Reading from the N-terminus, the 406-residue chain is Probable 2,3-bisphosphoglycerate-independent phosphoglycerate mutase (406 aa).

The protein belongs to the BPG-independent phosphoglycerate mutase family. A-PGAM subfamily.

It catalyses the reaction (2R)-2-phosphoglycerate = (2R)-3-phosphoglycerate. It functions in the pathway carbohydrate degradation; glycolysis; pyruvate from D-glyceraldehyde 3-phosphate: step 3/5. Catalyzes the interconversion of 2-phosphoglycerate and 3-phosphoglycerate. The polypeptide is Probable 2,3-bisphosphoglycerate-independent phosphoglycerate mutase (Thermus thermophilus (strain ATCC 27634 / DSM 579 / HB8)).